Here is a 576-residue protein sequence, read N- to C-terminus: Calmodulin-binding protein 60 B (576 aa).

The interval 1–25 (MMLPTKRPAPDHGDDERNEVMVPEP) is disordered. Residues 1-80 (MMLPTKRPAP…HPSSRPSLNR (80 aa)) are calmodulin-binding. A compositionally biased stretch (basic and acidic residues) spans 8–25 (PAPDHGDDERNEVMVPEP). Residues 150–273 (DERQDWTENE…AFHKRLAYKN (124 aa)) are DNA-binding.

This sequence belongs to the plant ACBP60 protein family. In terms of assembly, (Microbial infection) Interacts with V.dahliae SCP41. As to quaternary structure, interacts with calmodulin (CaM).

It localises to the nucleus. Functionally, transcription activator that binds DNA in a sequence-specific manner, likely 5'-GAAATTTTGG-3', to promote the expression of target genes. Required for pathogen resistance. This chain is Calmodulin-binding protein 60 B, found in Gossypium hirsutum (Upland cotton).